Here is a 363-residue protein sequence, read N- to C-terminus: Ly6/PLAUR domain-containing protein 3 (363 aa).

Positions 1–32 are cleaved as a signal peptide; that stretch reads MDAARRGDTQPVMWTTGWLLLLPLLLCEGAQA. One can recognise a UPAR/Ly6 1 domain in the interval 35-128; sequence CYSCVQKADD…LNLTLRGLNP (94 aa). N-linked (GlcNAc...) asparagine glycosylation is found at N120, N131, N178, and N185. The 83-residue stretch at 142 to 224 folds into the UPAR/Ly6 2 domain; sequence CYSCVGLSRE…GSCCQGPRCN (83 aa). Positions 238 to 248 are enriched in pro residues; that stretch reads PPLVLLPPPTT. 2 disordered regions span residues 238–287 and 301–336; these read PPLV…TSPH and LSGGAAGHGGTAGHGGAAGHQDRSNMEKYPGKGGAQ. Low complexity predominate over residues 249–278; sequence AAPSTRAQNSSSTTSTAAPTTTTSIIKPTT. The span at 304–318 shows a compositional bias: gly residues; the sequence is GAAGHGGTAGHGGAA. Basic and acidic residues predominate over residues 320-330; the sequence is HQDRSNMEKYP. S343 is lipidated: GPI-anchor amidated serine. A propeptide spans 344-363 (removed in mature form); the sequence is GTLGSWLSAVLLTVVAGAML.

Binds laminin-1 and laminin-5. Interacts with LGALS3. Interacts with AGR2 and AGR3.

The protein resides in the cell membrane. In terms of biological role, supports cell migration. May be involved in tumor progression. The sequence is that of Ly6/PLAUR domain-containing protein 3 (Lypd3) from Mus musculus (Mouse).